The chain runs to 458 residues: Carboxypeptidase N catalytic chain (458 aa).

The first 20 residues, 1-20, serve as a signal peptide directing secretion; the sequence is MSDLLSVFLHLLLLFKLVAP. Residues 24 to 338 enclose the Peptidase M14 domain; the sequence is RHHRYDDLVR…EALIQFLEQV (315 aa). Cys42 and Cys104 form a disulfide bridge. Residues His86, Glu89, and His216 each contribute to the Zn(2+) site. A disulfide bridge connects residues Cys271 and Cys311. Glu308 acts as the Proton donor/acceptor in catalysis. 3 O-linked (GalNAc...) threonine glycosylation sites follow: Thr400, Thr402, and Thr409. Residues 423–458 are disordered; it reads SPVRRAPSRRHGVRAKVQPQARKKEMEMRQLQRGPA.

It belongs to the peptidase M14 family. Tetramer of two catalytic chains and two glycosylated inactive chains. The cofactor is Zn(2+). In terms of tissue distribution, synthesized in the liver and secreted in plasma.

Its subcellular location is the secreted. The protein resides in the extracellular space. It carries out the reaction Release of a C-terminal basic amino acid, preferentially lysine.. Its function is as follows. Protects the body from potent vasoactive and inflammatory peptides containing C-terminal Arg or Lys (such as kinins or anaphylatoxins) which are released into the circulation. The polypeptide is Carboxypeptidase N catalytic chain (CPN1) (Homo sapiens (Human)).